The following is a 76-amino-acid chain: uncharacterized protein (76 aa).

Residues 40–60 (IVLNLVVLVGVVPLTWMFLGQ) traverse the membrane as a helical segment.

Its subcellular location is the membrane. This is an uncharacterized protein from Dictyostelium discoideum (Social amoeba).